Reading from the N-terminus, the 174-residue chain is NADH-ubiquinone oxidoreductase chain 6 (174 aa).

The next 4 helical transmembrane spans lie at 24 to 44, 53 to 73, 82 to 102, and 143 to 163; these read LALG…SGLM, ILFL…TSLA, IKLT…SMIL, and FVTI…VKIT.

It belongs to the complex I subunit 6 family.

Its subcellular location is the mitochondrion membrane. It catalyses the reaction a ubiquinone + NADH + 5 H(+)(in) = a ubiquinol + NAD(+) + 4 H(+)(out). Functionally, core subunit of the mitochondrial membrane respiratory chain NADH dehydrogenase (Complex I) that is believed to belong to the minimal assembly required for catalysis. Complex I functions in the transfer of electrons from NADH to the respiratory chain. The immediate electron acceptor for the enzyme is believed to be ubiquinone. The polypeptide is NADH-ubiquinone oxidoreductase chain 6 (mt:ND6) (Drosophila yakuba (Fruit fly)).